We begin with the raw amino-acid sequence, 209 residues long: Thymidylate kinase (209 aa).

Residue 10 to 17 (GLDGAGKS) participates in ATP binding.

Belongs to the thymidylate kinase family.

The enzyme catalyses dTMP + ATP = dTDP + ADP. Its function is as follows. Phosphorylation of dTMP to form dTDP in both de novo and salvage pathways of dTTP synthesis. The sequence is that of Thymidylate kinase from Francisella tularensis subsp. tularensis (strain FSC 198).